The following is a 375-amino-acid chain: 23S rRNA (uracil(747)-C(5))-methyltransferase RlmC (375 aa).

Cys-3, Cys-11, Cys-14, and Cys-87 together coordinate [4Fe-4S] cluster. Gln-212, Phe-241, Glu-262, and Asn-307 together coordinate S-adenosyl-L-methionine. Cys-334 serves as the catalytic Nucleophile.

This sequence belongs to the class I-like SAM-binding methyltransferase superfamily. RNA M5U methyltransferase family. RlmC subfamily.

It carries out the reaction uridine(747) in 23S rRNA + S-adenosyl-L-methionine = 5-methyluridine(747) in 23S rRNA + S-adenosyl-L-homocysteine + H(+). Catalyzes the formation of 5-methyl-uridine at position 747 (m5U747) in 23S rRNA. This chain is 23S rRNA (uracil(747)-C(5))-methyltransferase RlmC, found in Escherichia coli O7:K1 (strain IAI39 / ExPEC).